Consider the following 220-residue polypeptide: Ribose-5-phosphate isomerase A (220 aa).

Substrate-binding positions include 25–28, 80–83, and 93–96; these read TGST, DGAD, and KGGG. The Proton acceptor role is filled by glutamate 102. Lysine 120 is a substrate binding site.

The protein belongs to the ribose 5-phosphate isomerase family. Homodimer.

It carries out the reaction aldehydo-D-ribose 5-phosphate = D-ribulose 5-phosphate. It functions in the pathway carbohydrate degradation; pentose phosphate pathway; D-ribose 5-phosphate from D-ribulose 5-phosphate (non-oxidative stage): step 1/1. In terms of biological role, catalyzes the reversible conversion of ribose-5-phosphate to ribulose 5-phosphate. The polypeptide is Ribose-5-phosphate isomerase A (Bacillus cereus (strain ZK / E33L)).